We begin with the raw amino-acid sequence, 78 residues long: Large ribosomal subunit protein bL28 (78 aa).

Belongs to the bacterial ribosomal protein bL28 family.

The chain is Large ribosomal subunit protein bL28 from Tropheryma whipplei (strain TW08/27) (Whipple's bacillus).